The following is a 144-amino-acid chain: Large ribosomal subunit protein uL22 (144 aa).

The interval 123–144 is disordered; it reads ELVKKRTMGHKKEKAKQKQKQQ. Residues 125–144 are compositionally biased toward basic residues; the sequence is VKKRTMGHKKEKAKQKQKQQ.

It belongs to the universal ribosomal protein uL22 family. In terms of assembly, part of the 50S ribosomal subunit.

This protein binds specifically to 23S rRNA; its binding is stimulated by other ribosomal proteins, e.g. L4, L17, and L20. It is important during the early stages of 50S assembly. It makes multiple contacts with different domains of the 23S rRNA in the assembled 50S subunit and ribosome. Functionally, the globular domain of the protein is located near the polypeptide exit tunnel on the outside of the subunit, while an extended beta-hairpin is found that lines the wall of the exit tunnel in the center of the 70S ribosome. In Mycoplasma genitalium (strain ATCC 33530 / DSM 19775 / NCTC 10195 / G37) (Mycoplasmoides genitalium), this protein is Large ribosomal subunit protein uL22.